Here is a 200-residue protein sequence, read N- to C-terminus: Recombination protein RecR (200 aa).

The C4-type zinc finger occupies 59 to 74 (CGTCGSLDVTDPCAVC). Residues 82 to 177 (RLLCVVEEVG…PVTMLARGVP (96 aa)) enclose the Toprim domain.

The protein belongs to the RecR family.

In terms of biological role, may play a role in DNA repair. It seems to be involved in an RecBC-independent recombinational process of DNA repair. It may act with RecF and RecO. The sequence is that of Recombination protein RecR from Caulobacter vibrioides (strain ATCC 19089 / CIP 103742 / CB 15) (Caulobacter crescentus).